Here is a 289-residue protein sequence, read N- to C-terminus: Ribosomal protein L11 methyltransferase (289 aa).

Residues Thr-142, Gly-163, Asp-185, and Asn-226 each coordinate S-adenosyl-L-methionine.

The protein belongs to the methyltransferase superfamily. PrmA family.

The protein resides in the cytoplasm. It catalyses the reaction L-lysyl-[protein] + 3 S-adenosyl-L-methionine = N(6),N(6),N(6)-trimethyl-L-lysyl-[protein] + 3 S-adenosyl-L-homocysteine + 3 H(+). Its function is as follows. Methylates ribosomal protein L11. The chain is Ribosomal protein L11 methyltransferase from Legionella pneumophila (strain Paris).